We begin with the raw amino-acid sequence, 102 residues long: Cuticle protein AM/CP1114 (102 aa).

Residues 16–81 (DGNFHYSFET…VESPLLPSIP (66 aa)) form the Chitin-binding type R&amp;R domain. The span at 23 to 33 (FETSNGIQDTK) shows a compositional bias: polar residues. A disordered region spans residues 23-50 (FETSNGIQDTKTGVPGSAGQSNMNGDFS).

Arthrodial membrane and calcified shell.

The polypeptide is Cuticle protein AM/CP1114 (Cancer pagurus (Rock crab)).